Here is a 400-residue protein sequence, read N- to C-terminus: Subtilisin-like protease 7 (400 aa).

The signal sequence occupies residues 1–20; that stretch reads MGFITKAIPLALAAASVING. Residues 21-119 constitute a propeptide that is removed on maturation; the sequence is AEIMETRAGV…IERDARVQIN (99 aa). An Inhibitor I9 domain is found at 36 to 118; it reads KYIVVMNDGM…YIERDARVQI (83 aa). Asn58 carries N-linked (GlcNAc...) asparagine glycosylation. One can recognise a Peptidase S8 domain in the interval 129–400; that stretch reads SWGLARVGSK…SKLINNGSGM (272 aa). Residues Asp161 and His192 each act as charge relay system in the active site. Residues Asn222 and Asn252 are each glycosylated (N-linked (GlcNAc...) asparagine). Ser346 acts as the Charge relay system in catalysis. N-linked (GlcNAc...) asparagine glycosylation occurs at Asn396.

Belongs to the peptidase S8 family.

It is found in the secreted. In terms of biological role, secreted subtilisin-like serine protease with keratinolytic activity that contributes to pathogenicity. This is Subtilisin-like protease 7 (SUB7) from Trichophyton verrucosum (Cattle ringworm fungus).